The chain runs to 549 residues: MPNSKKSKKGGDQQHVTIVPVEPVKGENVDTVAYSSRSRISGESGHLIADVQSPHAKKHRIIFDRDHNVFEFRLLDGSAKHIIVYRLDELLSTTCYPFKIKNGVPIIPTKPTTSDKTLYFNFVYKKDKQKWRLKQIPVIFYTTSERDYWHSLIDTTLRRVKNRPKNIIIFINPFGGNGKAQKIFKDNVDAFFWLTPGLRYKVVLTERANHARDYIVEMPPEQWSAIDGLVSVGGDGLFNELLSGALLRTQTDAGRNIDNPSSHLVTPHIRFGIIGAGSANSIVSTVHETNDHATSAVHIAIGSECNVDVCTVHQHQKLIRISANAISYGWLGDVLRDSEEYRCLGPIRYQWSALRTTIRHPIYRGMVQFSLSHKENVNPKDQLPPCLEPCPVCMKPQGNDKYDYHWHAEFTHVICCVIPTVTPFTPYGLAPFTGIGDGTLDLALVPRISRFHNMQFMRKVAMYGGKQLYELDPSLNCYRVTKWSYQPDADQEDPGVWNLDGEILEQPKDEPLHFKLHPQLISFFGRDAAMVKPTKRSFIKKRKSSIVYQ.

Residues Asn162–Gln316 enclose the DAGKc domain. ATP is bound by residues Asn172 to Phe174 and Thr205 to Asn209. Substrate is bound at residue Gly233 to Gly236. Asp235 acts as the Proton donor/acceptor in catalysis. ATP-binding positions include Glu240, Gly277–Ala279, Arg342, Arg348, and Asp500–Glu502.

It carries out the reaction an N-acylsphing-4-enine + ATP = an N-acylsphing-4-enine 1-phosphate + ADP + H(+). The catalysed reaction is an N-acyl-15-methylhexadecasphing-4-enine + ATP = an N-acyl-15-methylhexadecasphing-4-enine-1-phosphate + ADP + H(+). The protein operates within lipid metabolism; sphingolipid metabolism. Its function is as follows. Catalyzes the phosphorylation of ceramide to form ceramide 1-phosphate. C.elegans contain specific sphingoid bases, which are unique or different in structure compared to the sphingoid bases found in other animals. Two examples of these distinctive compounds are: 15-methylhexadecasphinganine and 15-methylhexadecasphing-4-enine. This chain is Ceramide kinase 1, found in Caenorhabditis elegans.